Reading from the N-terminus, the 412-residue chain is Phosphoglycerate kinase (412 aa).

The (2R)-3-phosphoglycerate site is built by Val20, Asp21, Phe22, Asn23, Gln35, Arg36, Ser59, His60, Gly62, Arg63, Leu118, Arg119, His166, and Arg167. Gly210 is a binding site for ADP. Gly210 is a binding site for CDP. The AMP site is built by Ala211 and Lys212. ATP is bound at residue Ala211. Mg(2+) is bound at residue Ala211. Residues Ala214 and Asp215 each coordinate Mg(2+). Residue Asp215 participates in CDP binding. AMP is bound at residue Lys216. Position 216 (Lys216) interacts with ATP. Gly234 contributes to the ADP binding site. A CDP-binding site is contributed by Gly234. AMP contacts are provided by Gly235 and Gly308. The ATP site is built by Gly235 and Gly308. Gly333 and Phe338 together coordinate CDP. Position 338 (Phe338) interacts with ADP. Glu339 is a binding site for AMP. Residues Glu339, Asp370, and Thr371 each coordinate ATP. Asp370 provides a ligand contact to Mg(2+).

It belongs to the phosphoglycerate kinase family. As to quaternary structure, monomer. The cofactor is Mg(2+).

It is found in the cytoplasm. It carries out the reaction (2R)-3-phosphoglycerate + ATP = (2R)-3-phospho-glyceroyl phosphate + ADP. The protein operates within carbohydrate degradation; glycolysis; pyruvate from D-glyceraldehyde 3-phosphate: step 2/5. Its function is as follows. Catalyzes one of the two ATP producing reactions in the glycolytic pathway via the reversible conversion of 1,3-diphosphoglycerate to 3-phosphoglycerate. In addition to its role as a glycolytic enzyme, it seems that PGK-1 acts as a polymerase alpha cofactor protein (primer recognition protein). May play a role in sperm motility. In Aplysia californica (California sea hare), this protein is Phosphoglycerate kinase (PGK).